The following is a 297-amino-acid chain: Homoserine kinase (297 aa).

82–92 (PVSRGLGSSAA) serves as a coordination point for ATP.

This sequence belongs to the GHMP kinase family. Homoserine kinase subfamily.

It is found in the cytoplasm. The enzyme catalyses L-homoserine + ATP = O-phospho-L-homoserine + ADP + H(+). It participates in amino-acid biosynthesis; L-threonine biosynthesis; L-threonine from L-aspartate: step 4/5. In terms of biological role, catalyzes the ATP-dependent phosphorylation of L-homoserine to L-homoserine phosphate. This is Homoserine kinase from Clostridium botulinum (strain Okra / Type B1).